Consider the following 138-residue polypeptide: Small ribosomal subunit protein uS11 (138 aa).

A compositionally biased stretch (low complexity) spans 1-12 (MPPAKKAAAAPK). The tract at residues 1 to 27 (MPPAKKAAAAPKKGQKTRRREKKNVPH) is disordered. Residues 13–22 (KGQKTRRREK) show a composition bias toward basic residues.

It belongs to the universal ribosomal protein uS11 family. As to quaternary structure, part of the 30S ribosomal subunit. Interacts with proteins S7 and S18. Binds to IF-3.

Located on the platform of the 30S subunit, it bridges several disparate RNA helices of the 16S rRNA. Forms part of the Shine-Dalgarno cleft in the 70S ribosome. The polypeptide is Small ribosomal subunit protein uS11 (Mycolicibacterium paratuberculosis (strain ATCC BAA-968 / K-10) (Mycobacterium paratuberculosis)).